Reading from the N-terminus, the 75-residue chain is Large ribosomal subunit protein bL28 (75 aa).

The disordered stretch occupies residues 1–21; it reads MARVCQVTGKRPMSGNKRSHA.

Belongs to the bacterial ribosomal protein bL28 family.

The chain is Large ribosomal subunit protein bL28 from Blochmanniella pennsylvanica (strain BPEN).